Reading from the N-terminus, the 231-residue chain is Putative aminodeoxychorismate lyase (231 aa).

It belongs to the class-IV pyridoxal-phosphate-dependent aminotransferase family. It depends on pyridoxal 5'-phosphate as a cofactor.

It localises to the cytoplasm. Its subcellular location is the nucleus. It catalyses the reaction 4-amino-4-deoxychorismate = 4-aminobenzoate + pyruvate + H(+). The protein operates within cofactor biosynthesis; tetrahydrofolate biosynthesis; 4-aminobenzoate from chorismate: step 2/2. Its function is as follows. Converts 4-amino-4-deoxychorismate into 4-aminobenzoate (PABA) and pyruvate. The sequence is that of Putative aminodeoxychorismate lyase from Schizosaccharomyces pombe (strain 972 / ATCC 24843) (Fission yeast).